The following is a 42-amino-acid chain: Crotamine-IV-2 (42 aa).

Disulfide bonds link C4/C37, C11/C31, and C19/C38.

Belongs to the crotamine-myotoxin family. Monomer. Expressed by the venom gland.

It is found in the secreted. Functionally, cationic peptide that possesses multiple functions. It acts as a cell-penetrating peptide (CPP), and as a potent voltage-gated potassium channel (Kv) inhibitor. It exhibits antimicrobial activities, and hind limb paralysis. It also induces potent blockade of neuromuscular transmission in young chicken biventer cervicis preparation and potent myotoxic effect. In vivo, induces myonecrosis, upon intramuscular or subcutaneous injections into mice. This Crotalus durissus cumanensis (South American rattlesnake) protein is Crotamine-IV-2.